Consider the following 235-residue polypeptide: RING-H2 finger protein ATL33 (235 aa).

A helical membrane pass occupies residues 64–84 (LIFVVIAFVAVPALVYALFFN). Residues 87 to 133 (CSSSRRNSSSSRTSSSSDDTPHATVDTPPITETTVTSESGGKFHKDT) are disordered. The span at 88–103 (SSSRRNSSSSRTSSSS) shows a compositional bias: low complexity. Over residues 116–125 (ITETTVTSES) the composition is skewed to polar residues. The segment at 142–184 (CSVCLMVFTDSDELRQLSECKHAFHVLCIETWLKDHPNCPICR) adopts an RING-type; atypical zinc-finger fold. The span at 201 to 216 (NVNGNVNRSGGNRRVS) shows a compositional bias: low complexity. The interval 201 to 235 (NVNGNVNRSGGNRRVSATSRDDDWRQGLPDASSLV) is disordered.

The protein belongs to the RING-type zinc finger family. ATL subfamily.

It is found in the membrane. It carries out the reaction S-ubiquitinyl-[E2 ubiquitin-conjugating enzyme]-L-cysteine + [acceptor protein]-L-lysine = [E2 ubiquitin-conjugating enzyme]-L-cysteine + N(6)-ubiquitinyl-[acceptor protein]-L-lysine.. The protein operates within protein modification; protein ubiquitination. The chain is RING-H2 finger protein ATL33 (ATL33) from Arabidopsis thaliana (Mouse-ear cress).